Here is a 326-residue protein sequence, read N- to C-terminus: B3 domain-containing protein At5g60130 (326 aa).

Positions 12-110 (PKFFKVYLPD…CFHFCIYEHR (99 aa)) form a DNA-binding region, TF-B3. The segment at 124–222 (EEIKVESDSD…DEDERQYLDD (99 aa)) is disordered. Residues 143 to 199 (LSLDEDDDDSDYNCGEDNDSDDYADEAAVEKDDNDADDEDVDNVADDVPVEDDDYVE) show a composition bias toward acidic residues.

Its subcellular location is the nucleus. The polypeptide is B3 domain-containing protein At5g60130 (Arabidopsis thaliana (Mouse-ear cress)).